Reading from the N-terminus, the 125-residue chain is Small ribosomal subunit protein bS6 (125 aa).

The disordered stretch occupies residues 99–125 (ASPMVKAKDERRASAEVENNDFEDAEE). The span at 104-113 (KAKDERRASA) shows a compositional bias: basic and acidic residues. Over residues 116 to 125 (ENNDFEDAEE) the composition is skewed to acidic residues.

It belongs to the bacterial ribosomal protein bS6 family.

Its function is as follows. Binds together with bS18 to 16S ribosomal RNA. The polypeptide is Small ribosomal subunit protein bS6 (Mannheimia succiniciproducens (strain KCTC 0769BP / MBEL55E)).